A 204-amino-acid polypeptide reads, in one-letter code: Small heat shock protein, chloroplastic (204 aa).

Residues 34-55 are disordered; it reads QMGRVDHDHELDDRSNRAPISR. The span at 37–49 shows a compositional bias: basic and acidic residues; it reads RVDHDHELDDRSN. One can recognise a sHSP domain in the interval 98–204; that stretch reads GSGRAMRRGW…KKDVFQVMVD (107 aa).

It belongs to the small heat shock protein (HSP20) family.

Its subcellular location is the plastid. The protein resides in the chloroplast stroma. The sequence is that of Small heat shock protein, chloroplastic (HSP23) from Oxybasis rubra (Red goosefoot).